The chain runs to 635 residues: MGKIIGIDLGTTNSCVAVLDGDKPRVIENAEGERTTPSVIAYTDGETLVGQPAKRQAVTNPQNTLFAIKRLIGRRFEDEEVQRDIKIMPYKIVKADNGDAWVEAKGQKMAAPQVSAEVLKKMKKTAEDFLGEPVTAAVITVPAYFNDAQRQATKDAGRIAGLEVKRIINEPTAAALAYGLDKQGGDRTIAVYDLGGGTFDISIIEIDEVEGEKTFEVLSTNGDTHLGGEDFDNRMINYLVDEFKKDQGIDLRNDPLAMQRLKEAAEKAKIELSSAQQTDVNLPYITADATGPKHMNIKVTRAKLEALVEDLVQRSLEPLKVALADADLSVNDITDVILVGGQTRMPMVQKKVAEFFGKEPRKDVNPDEAVAVGAAVQGGVLAGEVKDVLLLDVTPLSLGIETMGGVMTKLIEKNTTIPTKANQVFSTAEDNQSAVTIHVLQGERKQAMYNKSLGQFNLEGINPAPRGMPQIEVIFDLDADGILHVSAKDKQTGKEQKITIQASGGLSDAEIEKMVQEAEANKEADKKFEELATARNQADQMIHATRKQITEAGEALPADEKAKIETAINELETAKKGEDKAEIDAKVQALMAAAQKLMEIAQQQAQAQGANAGQSSAKEDDVVDAEFEEVNDDKK.

At threonine 198 the chain carries Phosphothreonine; by autocatalysis. Residues alanine 601–serine 616 show a composition bias toward low complexity. Positions alanine 601–lysine 635 are disordered. Acidic residues predominate over residues aspartate 621–lysine 635.

It belongs to the heat shock protein 70 family.

In terms of biological role, acts as a chaperone. This is Chaperone protein DnaK from Vibrio cholerae serotype O1 (strain ATCC 39541 / Classical Ogawa 395 / O395).